We begin with the raw amino-acid sequence, 132 residues long: MSMTDPIADMLTRIRNAGMAKHQKVDIPSSNLKVSLANLLRNEGFIKNYKVIADNKQGVLRVYLKYIDEKDPVINEIKRISKPGGRVYVDSDGIPKVKNGLGVAVLSTSKGIITDKTARELGVGGELLCTVW.

Belongs to the universal ribosomal protein uS8 family. Part of the 30S ribosomal subunit. Contacts proteins S5 and S12.

One of the primary rRNA binding proteins, it binds directly to 16S rRNA central domain where it helps coordinate assembly of the platform of the 30S subunit. The polypeptide is Small ribosomal subunit protein uS8 (Geotalea uraniireducens (strain Rf4) (Geobacter uraniireducens)).